Reading from the N-terminus, the 316-residue chain is WSCD family member GA21586 (316 aa).

A helical membrane pass occupies residues 8-28 (FFGVSATIIIYIGGVLFLSMN). N-linked (GlcNAc...) asparagine glycosylation is found at Asn-78, Asn-150, Asn-226, and Asn-232.

The protein belongs to the WSCD family.

The protein localises to the membrane. This Drosophila pseudoobscura pseudoobscura (Fruit fly) protein is WSCD family member GA21586.